The following is a 341-amino-acid chain: Ribonucleoside-diphosphate reductase subunit beta (341 aa).

Fe cation-binding residues include D89, E120, and H123. Residue Y127 is part of the active site. Residues E185, E219, and H222 each coordinate Fe cation.

It belongs to the ribonucleoside diphosphate reductase small chain family. Tetramer of two alpha and two beta subunits. Fe cation is required as a cofactor.

It catalyses the reaction a 2'-deoxyribonucleoside 5'-diphosphate + [thioredoxin]-disulfide + H2O = a ribonucleoside 5'-diphosphate + [thioredoxin]-dithiol. Provides the precursors necessary for DNA synthesis. Catalyzes the biosynthesis of deoxyribonucleotides from the corresponding ribonucleotides. This Helicobacter pylori (strain J99 / ATCC 700824) (Campylobacter pylori J99) protein is Ribonucleoside-diphosphate reductase subunit beta (nrdB).